The sequence spans 127 residues: Glycine cleavage system H protein (127 aa).

The Lipoyl-binding domain occupies 22-104; sequence EVVIGITHFA…YEGAWMVKVE (83 aa). An N6-lipoyllysine modification is found at K63.

Belongs to the GcvH family. As to quaternary structure, the glycine cleavage system is composed of four proteins: P, T, L and H. (R)-lipoate is required as a cofactor.

Functionally, the glycine cleavage system catalyzes the degradation of glycine. The H protein shuttles the methylamine group of glycine from the P protein to the T protein. In terms of biological role, is also involved in protein lipoylation via its role as an octanoyl/lipoyl carrier protein intermediate. This chain is Glycine cleavage system H protein, found in Bacillus cereus (strain G9842).